We begin with the raw amino-acid sequence, 597 residues long: Glypican-3 (597 aa).

The first 24 residues, 1–24, serve as a signal peptide directing secretion; sequence MAGTVRTACLLVAMLLGLGCLGQA. Gln-25 is subject to Pyrrolidone carboxylic acid. Cystine bridges form between Cys-34–Cys-71, Cys-64–Cys-261, Cys-72–Cys-264, Cys-196–Cys-348, Cys-251–Cys-284, Cys-273–Cys-421, and Cys-277–Cys-409. N-linked (GlcNAc...) asparagine glycans are attached at residues Asn-123 and Asn-240. Position 351 is a phosphoserine (Ser-351). N-linked (GlcNAc...) asparagine glycosylation occurs at Asn-417. O-linked (Xyl...) (glycosaminoglycan) serine glycans are attached at residues Ser-494 and Ser-508. The disordered stretch occupies residues 533-553; that stretch reads DAPGNKQHGNQKDNEITTSHS.

It belongs to the glypican family. In terms of assembly, heterodimer; disulfide-linked. Cleavage by a furin-like convertase results in production of alpha and beta chains which form a disulfide-linked heterodimer. Interacts with DPP4. Interacts with FGF2. Interacts with WNT5A. Also interacts with WNT3A and WNT7B. Interacts with hedgehog protein SHH; the heparan sulfate chains are not required for the interaction. Also interacts with hedgehog protein IHH. Interacts with CD81. Interacts with Wnt receptors FZD4, FZD7 and FZD8; the heparan sulfate chains are required for the interaction. Post-translationally, O-glycosylated; contains heparan sulfate and/or chondroitin sulfate. In terms of processing, cleaved intracellularly by a furin-like convertase to generate 2 subunits, alpha and beta, which remain associated through disulfide bonds and are associated with the cell surface via the GPI-anchor. This processing is essential for its role in inhibition of hedgehog signaling. A second proteolytic event may result in cleavage of the protein on the cell surface, separating it from the GPI-anchor and leading to its shedding from the cell surface.

It is found in the cell membrane. In terms of biological role, cell surface proteoglycan. Negatively regulates the hedgehog signaling pathway when attached via the GPI-anchor to the cell surface by competing with the hedgehog receptor PTC1 for binding to hedgehog proteins. Binding to the hedgehog protein SHH triggers internalization of the complex by endocytosis and its subsequent lysosomal degradation. Positively regulates the canonical Wnt signaling pathway by binding to the Wnt receptor Frizzled and stimulating the binding of the Frizzled receptor to Wnt ligands. Positively regulates the non-canonical Wnt signaling pathway. Binds to CD81 which decreases the availability of free CD81 for binding to the transcriptional repressor HHEX, resulting in nuclear translocation of HHEX and transcriptional repression. Inhibits the dipeptidyl peptidase activity of DPP4. Plays a role in limb patterning and skeletal development by controlling the cellular response to BMP4. Modulates the effects of growth factors BMP2, BMP7 and FGF7 on renal branching morphogenesis. Required for coronary vascular development. Plays a role in regulating cell movements during gastrulation. The sequence is that of Glypican-3 (Gpc3) from Rattus norvegicus (Rat).